The sequence spans 359 residues: Ribosomal RNA large subunit methyltransferase M (359 aa).

S-adenosyl-L-methionine contacts are provided by residues serine 186, cysteine 219–glycine 222, aspartate 238, aspartate 258, and aspartate 275. Lysine 304 serves as the catalytic Proton acceptor.

The protein belongs to the class I-like SAM-binding methyltransferase superfamily. RNA methyltransferase RlmE family. RlmM subfamily. In terms of assembly, monomer.

It localises to the cytoplasm. The enzyme catalyses cytidine(2498) in 23S rRNA + S-adenosyl-L-methionine = 2'-O-methylcytidine(2498) in 23S rRNA + S-adenosyl-L-homocysteine + H(+). Its function is as follows. Catalyzes the 2'-O-methylation at nucleotide C2498 in 23S rRNA. The protein is Ribosomal RNA large subunit methyltransferase M of Vibrio vulnificus (strain YJ016).